Here is a 318-residue protein sequence, read N- to C-terminus: Methionyl-tRNA formyltransferase (318 aa).

112–115 lines the (6S)-5,6,7,8-tetrahydrofolate pocket; sequence SILP.

Belongs to the Fmt family.

It catalyses the reaction L-methionyl-tRNA(fMet) + (6R)-10-formyltetrahydrofolate = N-formyl-L-methionyl-tRNA(fMet) + (6S)-5,6,7,8-tetrahydrofolate + H(+). Functionally, attaches a formyl group to the free amino group of methionyl-tRNA(fMet). The formyl group appears to play a dual role in the initiator identity of N-formylmethionyl-tRNA by promoting its recognition by IF2 and preventing the misappropriation of this tRNA by the elongation apparatus. This chain is Methionyl-tRNA formyltransferase, found in Shewanella baltica (strain OS195).